The following is a 120-amino-acid chain: Chaperonin GroEL (120 aa).

Residue aspartate 23–threonine 27 coordinates ATP.

Belongs to the chaperonin (HSP60) family. Forms a cylinder of 14 subunits composed of two heptameric rings stacked back-to-back. Interacts with the co-chaperonin GroES.

It localises to the cytoplasm. It catalyses the reaction ATP + H2O + a folded polypeptide = ADP + phosphate + an unfolded polypeptide.. Its function is as follows. Together with its co-chaperonin GroES, plays an essential role in assisting protein folding. The GroEL-GroES system forms a nano-cage that allows encapsulation of the non-native substrate proteins and provides a physical environment optimized to promote and accelerate protein folding. The sequence is that of Chaperonin GroEL from Mycolicibacterium vaccae (Mycobacterium vaccae).